A 215-amino-acid chain; its full sequence is Nucleoside triphosphate pyrophosphatase (215 aa).

Belongs to the Maf family. It depends on a divalent metal cation as a cofactor.

The protein localises to the cytoplasm. It catalyses the reaction a ribonucleoside 5'-triphosphate + H2O = a ribonucleoside 5'-phosphate + diphosphate + H(+). It carries out the reaction a 2'-deoxyribonucleoside 5'-triphosphate + H2O = a 2'-deoxyribonucleoside 5'-phosphate + diphosphate + H(+). Nucleoside triphosphate pyrophosphatase. May have a dual role in cell division arrest and in preventing the incorporation of modified nucleotides into cellular nucleic acids. The sequence is that of Nucleoside triphosphate pyrophosphatase from Rickettsia conorii (strain ATCC VR-613 / Malish 7).